The sequence spans 167 residues: METQRASLCLGRWSLWLLLLALVVPSASAQALSYREAVLRAVDRLNEQSSEANLYRLLELDQPPKADEDPGTPKPVSFTVKETVCPRPTWRPPELCDFKENGRVKQCVGTVTLDQIKDPLDITCNEIQSVGLLSRLRDFLSDRGRRLGEKIERIGQKIKDLSEFFQS.

The signal sequence occupies residues 1–29 (METQRASLCLGRWSLWLLLLALVVPSASA). A propeptide spanning residues 30–130 (QALSYREAVL…DITCNEIQSV (101 aa)) is cleaved from the precursor. Cystine bridges form between Cys85–Cys96 and Cys107–Cys124.

The protein belongs to the cathelicidin family.

The protein localises to the secreted. Exerts antimicrobial activity against both Gram-positive and negative bacteria with minimal inhibitory concentrations ranging over 1-4 micro molar. Its activity appears to be mediated by its ability to damage bacterial membranes. The protein is Antibacterial peptide PMAP-37 (PMAP37) of Sus scrofa (Pig).